The following is a 679-amino-acid chain: F-box/LRR-repeat protein 5 (679 aa).

The hemerythrin-like stretch occupies residues 1–159 (MAPFPDEVDV…IKQQVMLQHC (159 aa)). Fe(3+) contacts are provided by His15, His57, Glu58, Glu61, His80, His126, and Glu130. An F-box domain is found at 205-251 (RVSVSSLPQELLLRIFRFLGPQDLCRCAQVCSVWTQVTRTGSLWRHL). 7 LRR repeats span residues 316–342 (EKLL…SLAY), 343–367 (SSTL…LDLT), 368–395 (QTDV…DLSG), 396–426 (CDKI…LLQA), 565–595 (CWFE…SLSG), 596–623 (CHQI…NLSG), and 624–649 (CPLI…HFYY). Cys650, Cys664, Cys674, and Cys675 together coordinate [2Fe-2S] cluster.

In terms of assembly, part of a SCF (SKP1-cullin-F-box) protein ligase complex. The cofactor is [2Fe-2S] cluster. In terms of processing, ubiquitinated upon iron and oxygen depletion, leading to its degradation by the proteasome. Ubiquitination is regulated by the hemerythrin-like region that acts as an oxygen and iron sensor.

The protein localises to the cytoplasm. Its subcellular location is the perinuclear region. The protein resides in the nucleus. It participates in protein modification; protein ubiquitination. In terms of biological role, component of some SCF (SKP1-cullin-F-box) protein ligase complex that plays a central role in iron homeostasis by promoting the ubiquitination and subsequent degradation of ireb2/irp2. Upon high iron and oxygen level, it specifically recognizes and binds ireb2/irp2, promoting its ubiquitination and degradation by the proteasome. The protein is F-box/LRR-repeat protein 5 (fbxl5) of Danio rerio (Zebrafish).